Reading from the N-terminus, the 335-residue chain is Ferrochelatase (335 aa).

2 residues coordinate Fe cation: histidine 207 and glutamate 288.

This sequence belongs to the ferrochelatase family.

Its subcellular location is the cytoplasm. It carries out the reaction heme b + 2 H(+) = protoporphyrin IX + Fe(2+). Its pathway is porphyrin-containing compound metabolism; protoheme biosynthesis; protoheme from protoporphyrin-IX: step 1/1. Functionally, catalyzes the ferrous insertion into protoporphyrin IX. The polypeptide is Ferrochelatase (Helicobacter pylori (strain HPAG1)).